We begin with the raw amino-acid sequence, 420 residues long: 3-isopropylmalate dehydratase large subunit (420 aa).

[4Fe-4S] cluster is bound by residues C300, C360, and C363.

It belongs to the aconitase/IPM isomerase family. LeuC type 2 subfamily. Heterodimer of LeuC and LeuD. [4Fe-4S] cluster serves as cofactor.

It carries out the reaction (2R,3S)-3-isopropylmalate = (2S)-2-isopropylmalate. It functions in the pathway amino-acid biosynthesis; L-leucine biosynthesis; L-leucine from 3-methyl-2-oxobutanoate: step 2/4. In terms of biological role, catalyzes the isomerization between 2-isopropylmalate and 3-isopropylmalate, via the formation of 2-isopropylmaleate. This Clostridium kluyveri (strain ATCC 8527 / DSM 555 / NBRC 12016 / NCIMB 10680 / K1) protein is 3-isopropylmalate dehydratase large subunit.